The chain runs to 348 residues: Holliday junction branch migration complex subunit RuvB (348 aa).

A large ATPase domain (RuvB-L) region spans residues 1–183 (MAPQPRRLIA…FGIPIRLEYY (183 aa)). ATP-binding positions include L22, R23, G64, K67, T68, T69, 130-132 (EDF), R173, Y183, and R220. T68 provides a ligand contact to Mg(2+). The tract at residues 184 to 254 (TVEELECIVR…VADRALRLLD (71 aa)) is small ATPAse domain (RuvB-S). A head domain (RuvB-H) region spans residues 257 to 348 (HIGLDQMDRR…FQLFSEGGEE (92 aa)). Residues R293, R312, and R317 each contribute to the DNA site.

Belongs to the RuvB family. Homohexamer. Forms an RuvA(8)-RuvB(12)-Holliday junction (HJ) complex. HJ DNA is sandwiched between 2 RuvA tetramers; dsDNA enters through RuvA and exits via RuvB. An RuvB hexamer assembles on each DNA strand where it exits the tetramer. Each RuvB hexamer is contacted by two RuvA subunits (via domain III) on 2 adjacent RuvB subunits; this complex drives branch migration. In the full resolvosome a probable DNA-RuvA(4)-RuvB(12)-RuvC(2) complex forms which resolves the HJ.

It localises to the cytoplasm. The catalysed reaction is ATP + H2O = ADP + phosphate + H(+). The RuvA-RuvB-RuvC complex processes Holliday junction (HJ) DNA during genetic recombination and DNA repair, while the RuvA-RuvB complex plays an important role in the rescue of blocked DNA replication forks via replication fork reversal (RFR). RuvA specifically binds to HJ cruciform DNA, conferring on it an open structure. The RuvB hexamer acts as an ATP-dependent pump, pulling dsDNA into and through the RuvAB complex. RuvB forms 2 homohexamers on either side of HJ DNA bound by 1 or 2 RuvA tetramers; 4 subunits per hexamer contact DNA at a time. Coordinated motions by a converter formed by DNA-disengaged RuvB subunits stimulates ATP hydrolysis and nucleotide exchange. Immobilization of the converter enables RuvB to convert the ATP-contained energy into a lever motion, pulling 2 nucleotides of DNA out of the RuvA tetramer per ATP hydrolyzed, thus driving DNA branch migration. The RuvB motors rotate together with the DNA substrate, which together with the progressing nucleotide cycle form the mechanistic basis for DNA recombination by continuous HJ branch migration. Branch migration allows RuvC to scan DNA until it finds its consensus sequence, where it cleaves and resolves cruciform DNA. This chain is Holliday junction branch migration complex subunit RuvB, found in Methylocella silvestris (strain DSM 15510 / CIP 108128 / LMG 27833 / NCIMB 13906 / BL2).